A 480-amino-acid polypeptide reads, in one-letter code: Aspartyl/glutamyl-tRNA(Asn/Gln) amidotransferase subunit B (480 aa).

It belongs to the GatB/GatE family. GatB subfamily. Heterotrimer of A, B and C subunits.

It catalyses the reaction L-glutamyl-tRNA(Gln) + L-glutamine + ATP + H2O = L-glutaminyl-tRNA(Gln) + L-glutamate + ADP + phosphate + H(+). The catalysed reaction is L-aspartyl-tRNA(Asn) + L-glutamine + ATP + H2O = L-asparaginyl-tRNA(Asn) + L-glutamate + ADP + phosphate + 2 H(+). Functionally, allows the formation of correctly charged Asn-tRNA(Asn) or Gln-tRNA(Gln) through the transamidation of misacylated Asp-tRNA(Asn) or Glu-tRNA(Gln) in organisms which lack either or both of asparaginyl-tRNA or glutaminyl-tRNA synthetases. The reaction takes place in the presence of glutamine and ATP through an activated phospho-Asp-tRNA(Asn) or phospho-Glu-tRNA(Gln). This chain is Aspartyl/glutamyl-tRNA(Asn/Gln) amidotransferase subunit B, found in Caldicellulosiruptor saccharolyticus (strain ATCC 43494 / DSM 8903 / Tp8T 6331).